The chain runs to 73 residues: MKFTVYVKPNSKKVFFRKEEDGVLTIAVREPALEGKANEAVIESISKEMKVPKSKIRILSGQKNKKKIIEIDL.

The protein belongs to the UPF0235 family.

The protein is UPF0235 protein LA_1736 of Leptospira interrogans serogroup Icterohaemorrhagiae serovar Lai (strain 56601).